Here is a 543-residue protein sequence, read N- to C-terminus: UPF0324 membrane protein RB9488 (543 aa).

Residues 1 to 22 (MNSNTPSSDNSSPDNVSPDTSD) are compositionally biased toward low complexity. The segment at 1 to 41 (MNSNTPSSDNSSPDNVSPDTSDMASAGDDSALATPPPRPSL) is disordered. The helical transmembrane segment at 51-73 (WWAIWCAALLLLIAFAAVWIGQP) threads the bilayer. A disordered region spans residues 91 to 120 (VETAPENAGPSAEAENEAIETENTAPAENA). A run of 11 helical transmembrane segments spans residues 160 to 182 (ISSS…AFAN), 189 to 211 (AGAF…WMSG), 221 to 243 (EYAL…PDFL), 270 to 292 (LALG…ITTY), 307 to 329 (NMVI…AAAC), 336 to 358 (LSLS…PAVI), 368 to 390 (GGAW…AVLG), 403 to 422 (IQNI…WVTF), 437 to 459 (IWYR…SILY), 479 to 496 (TLRG…GLET), and 511 to 533 (LVLY…YLMF).

This sequence belongs to the UPF0324 family.

The protein localises to the cell membrane. In Rhodopirellula baltica (strain DSM 10527 / NCIMB 13988 / SH1), this protein is UPF0324 membrane protein RB9488.